The chain runs to 255 residues: Ribonuclease HII (255 aa).

Residues 72–255 (AIICGIDEVG…KSFEPIKSLL (184 aa)) form the RNase H type-2 domain. A divalent metal cation contacts are provided by aspartate 78, glutamate 79, and aspartate 170.

This sequence belongs to the RNase HII family. Requires Mn(2+) as cofactor. Mg(2+) is required as a cofactor.

The protein localises to the cytoplasm. The enzyme catalyses Endonucleolytic cleavage to 5'-phosphomonoester.. In terms of biological role, endonuclease that specifically degrades the RNA of RNA-DNA hybrids. This Staphylococcus aureus (strain bovine RF122 / ET3-1) protein is Ribonuclease HII.